A 4011-amino-acid chain; its full sequence is Hybrid PKS-NRPS synthetase mycA (4011 aa).

Residues 12-451 (NEPIAIIGSA…GANAHVILEN (440 aa)) form the Ketosynthase family 3 (KS3) domain. Catalysis depends on for beta-ketoacyl synthase activity residues C185, H324, and H373. The segment at 576–903 (VFTGQGAQWA…PYTGTLSRGS (328 aa)) is acyl transferase (AT) domain. Residues 977-1113 (NPLLGRRIPD…GRVIVTLAGT (137 aa)) form an N-terminal hotdog fold region. The PKS/mFAS DH domain maps to 977 to 1290 (NPLLGRRIPD…ITPLATRTGQ (314 aa)). Residues 978–1287 (PLLGRRIPDG…GVRITPLATR (310 aa)) are dehydratase (DH) domain. H1009 acts as the Proton acceptor; for dehydratase activity in catalysis. The interval 1135-1290 (TAEVREDEFY…ITPLATRTGQ (156 aa)) is C-terminal hotdog fold. The active-site Proton donor; for dehydratase activity is D1195. The segment at 1434-1626 (YYVEALGIRE…FSGIDTITPE (193 aa)) is methyltransferase (MT) domain. The segment at 2138 to 2311 (TYVLFGLTSD…AASVLHLGAV (174 aa)) is ketoreductase (KR)domain. Residues 2429–2504 (DSFLQKLQIM…DLVAFAHEKL (76 aa)) form the Carrier 1 domain. S2464 is modified (O-(pantetheine 4'-phosphoryl)serine). The interval 2519 to 2607 (AAAAAAAERS…PREQDVERTA (89 aa)) is disordered. Polar residues predominate over residues 2559-2578 (PASSSTGSDHPTSVTSSGHT). The tract at residues 2604–2975 (ERTAPMSLGQ…KPDSTLGSAP (372 aa)) is condensation. The adenylation stretch occupies residues 3009–3414 (IIQRNPDTIA…GELEILGRID (406 aa)). The interval 3525 to 3544 (AKEEEEEKRPNGSSAAPLTQ) is disordered. Residues 3535 to 3544 (NGSSAAPLTQ) are compositionally biased toward polar residues. The 81-residue stretch at 3541 to 3621 (PLTQQELQLR…AMAAAVHDAA (81 aa)) folds into the Carrier 2 domain. The residue at position 3581 (S3581) is an O-(pantetheine 4'-phosphoryl)serine. The tract at residues 3671 to 3978 (VVILTGATGF…RTVPLGQWIE (308 aa)) is reductase-like.

This sequence in the C-terminal section; belongs to the NRP synthetase family.

The enzyme catalyses L-leucine + 8 malonyl-CoA + 4 S-adenosyl-L-methionine + ATP + 9 NADPH + 12 H(+) = (5S)-5-(2-methylpropyl)-3-[(2E,6R,8E,10E,12E)-6,8,10,12-tetramethyltetradeca-2,8,10,12-tetraenoyl]-2,5-dihydro-1H-pyrrol-2-one + AMP + 4 S-adenosyl-L-homocysteine + 8 CO2 + diphosphate + 9 NADP(+) + 8 CoA + 7 H2O. The protein operates within mycotoxin biosynthesis. In terms of biological role, hybrid PKS-NRPS synthetase; part of the gene cluster that mediates the biosynthesis of myceliothermophins, mycotoxins that contain a trans-fused decalin ring system connected to a conjugated 3-pyrrolin-2-one moiety and that have potential anti-tumor properties. The polyketide synthase module (PKS) of the PKS-NRPS mycA is responsible for the synthesis of the octaketide backbone. The downstream nonribosomal peptide synthetase (NRPS) module then amidates the carboxyl end of the octaketide with a leucine. A reductase-like domain (R) at the C-terminus catalyzes the reductive release of the polyketide-amino acid intermediate. Because mycA lacks a designated enoylreductase (ER) domain, the required activity is provided the enoyl reductase mycC. Following mycA-catalyzed construction and release of aminoacyl polyketide aldehyde, Knoevenagel condensation yields the expected ketone. This C18 keto acyclic precursor is the substrate of the Diels-Alderase mycB, that catalyzes the Diels-Alder cycloaddition to produce myceliothermophin E. A yet unknown oxygenase involved in the production of myceliothermophin A, via substitution with a hydroxyl group at the C21, has still to be identified. In Thermothelomyces thermophilus (strain ATCC 42464 / BCRC 31852 / DSM 1799) (Sporotrichum thermophile), this protein is Hybrid PKS-NRPS synthetase mycA.